A 694-amino-acid chain; its full sequence is Elongation factor G (694 aa).

One can recognise a tr-type G domain in the interval 10 to 285; sequence EKTRNIGIMA…GVVDYLPSPL (276 aa). GTP contacts are provided by residues 19-26, 83-87, and 137-140; these read AHIDAGKT, DTPGH, and NKMD.

The protein belongs to the TRAFAC class translation factor GTPase superfamily. Classic translation factor GTPase family. EF-G/EF-2 subfamily.

It localises to the cytoplasm. In terms of biological role, catalyzes the GTP-dependent ribosomal translocation step during translation elongation. During this step, the ribosome changes from the pre-translocational (PRE) to the post-translocational (POST) state as the newly formed A-site-bound peptidyl-tRNA and P-site-bound deacylated tRNA move to the P and E sites, respectively. Catalyzes the coordinated movement of the two tRNA molecules, the mRNA and conformational changes in the ribosome. This chain is Elongation factor G, found in Lactobacillus delbrueckii subsp. bulgaricus (strain ATCC 11842 / DSM 20081 / BCRC 10696 / JCM 1002 / NBRC 13953 / NCIMB 11778 / NCTC 12712 / WDCM 00102 / Lb 14).